Here is a 361-residue protein sequence, read N- to C-terminus: Peptidyl-prolyl cis-trans isomerase CYP40 (361 aa).

The PPIase cyclophilin-type domain occupies 7-172 (FMDISIGGEL…QDVVIHDCGE (166 aa)). 2 TPR repeats span residues 212–245 (VDFV…LDIC) and 298–331 (VKAL…EPND).

The protein belongs to the cyclophilin-type PPIase family. As to expression, expressed at low levels in seedlings, roots, shoots, leaves, stems, inflorescences, flowers and siliques, with highest levels dividing tissues.

It localises to the cytoplasm. The catalysed reaction is [protein]-peptidylproline (omega=180) = [protein]-peptidylproline (omega=0). Binds cyclosporin A (CsA). CsA mediates some of its effects via an inhibitory action on PPIase. Functionally, PPIases accelerate the folding of proteins. It catalyzes the cis-trans isomerization of proline imidic peptide bonds in oligopeptides. Involved in promoting the expression of the juvenile phase of vegetative development, and, to a lower extent, in regulating the positioning of floral buds, floral morphogenesis and the expression of HSPs. Collaboratively with RBL and ULT1, influences floral meristem (FM) determinacy in an AGAMOUS and SUPERMAN-dependent manner, thus contributing to the floral developmental homeostasis. The protein is Peptidyl-prolyl cis-trans isomerase CYP40 of Arabidopsis thaliana (Mouse-ear cress).